We begin with the raw amino-acid sequence, 49 residues long: Large ribosomal subunit protein bL33B (49 aa).

This sequence belongs to the bacterial ribosomal protein bL33 family.

This chain is Large ribosomal subunit protein bL33B, found in Staphylococcus saprophyticus subsp. saprophyticus (strain ATCC 15305 / DSM 20229 / NCIMB 8711 / NCTC 7292 / S-41).